Here is a 325-residue protein sequence, read N- to C-terminus: 5-dehydro-2-deoxygluconokinase (325 aa).

This sequence belongs to the carbohydrate kinase PfkB family.

It catalyses the reaction 5-dehydro-2-deoxy-D-gluconate + ATP = 6-phospho-5-dehydro-2-deoxy-D-gluconate + ADP + H(+). Its pathway is polyol metabolism; myo-inositol degradation into acetyl-CoA; acetyl-CoA from myo-inositol: step 5/7. Functionally, catalyzes the phosphorylation of 5-dehydro-2-deoxy-D-gluconate (2-deoxy-5-keto-D-gluconate or DKG) to 6-phospho-5-dehydro-2-deoxy-D-gluconate (DKGP). The sequence is that of 5-dehydro-2-deoxygluconokinase from Listeria innocua serovar 6a (strain ATCC BAA-680 / CLIP 11262).